We begin with the raw amino-acid sequence, 467 residues long: Ethanolamine ammonia-lyase reactivase EutA (467 aa).

The protein belongs to the EutA family.

The protein localises to the bacterial microcompartment. It functions in the pathway amine and polyamine degradation; ethanolamine degradation. Its function is as follows. Reactivates suicidally inhibited ethanolamine ammonia-lyase (EAL), cyanocobalamin-inactivated EAL and O(2)-inactivated EAL; requires Mg(2+), ATP and adenosylcobalamin. Reactivation probably occurs by the ATP-dependent exchange of cobalamin. Protects EAL from inhibition by CN-B12, does not have adenosylation activity. Expression of the eut operon allows this bacteria to use ethanolamine as a carbon, nitrogen and energy source. It relies on cobalamin (vitamin B12) both as a cofactor for the ethanolamine ammonia-lyase (EAL) activity and to induce the operon. EA enhances bacterial survival in macrophages in a concentration-dependent manner, suggesting it is an important nutrient during infection. This chain is Ethanolamine ammonia-lyase reactivase EutA, found in Salmonella typhimurium (strain LT2 / SGSC1412 / ATCC 700720).